Here is a 317-residue protein sequence, read N- to C-terminus: Putative HTH-type transcriptional regulatory protein Mboo_0195 (317 aa).

The region spanning 132-185 (LRELRERRSMSLGDLGQVLGVSRRTISKYESGMGTTLEVAIRIEEYFNTGVVES) is the HTH cro/C1-type domain. Positions 143 to 162 (LGDLGQVLGVSRRTISKYES) form a DNA-binding region, H-T-H motif.

The polypeptide is Putative HTH-type transcriptional regulatory protein Mboo_0195 (Methanoregula boonei (strain DSM 21154 / JCM 14090 / 6A8)).